We begin with the raw amino-acid sequence, 265 residues long: Synaptoporin (265 aa).

At Met-1 to Val-4 the chain is on the cytoplasmic side. The MARVEL domain maps to Met-1–Gly-202. The chain crosses the membrane as a helical span at residues Ile-5–Leu-25. Residues Arg-26–Phe-81 lie on the Vesicular side of the membrane. Residues Asn-33 and Asn-38 are each glycosylated (N-linked (GlcNAc...) asparagine). Residues Phe-82–Phe-102 form a helical membrane-spanning segment. The Cytoplasmic segment spans residues Phe-103 to Pro-114. A helical membrane pass occupies residues Leu-115–Trp-135. Residues Ala-136–Asn-177 lie on the Vesicular side of the membrane. A helical membrane pass occupies residues Thr-178 to Phe-198. Over Lys-199–Ile-265 the chain is Cytoplasmic. 5 consecutive repeat copies span residues Tyr-210–Pro-214, Tyr-222–Arg-226, Tyr-227–Ser-231, Tyr-232–Gly-236, and Tyr-238–Ala-242. The 5 X approximate repeats stretch occupies residues Tyr-210 to Ala-242. Ser-212 is subject to Phosphoserine. Residues Ser-221–Glu-230 show a composition bias toward polar residues. The segment at Ser-221–Ile-265 is disordered. Residues Gln-240–Ile-265 show a composition bias toward polar residues.

Belongs to the synaptophysin/synaptobrevin family.

The protein resides in the cytoplasmic vesicle. Its subcellular location is the secretory vesicle. It localises to the synaptic vesicle membrane. It is found in the synapse. The protein localises to the synaptosome. Its function is as follows. Intrinsic membrane protein of small synaptic vesicles. Probable vesicular channel protein. This Mus musculus (Mouse) protein is Synaptoporin (Synpr).